A 278-amino-acid polypeptide reads, in one-letter code: Manganese import system permease protein ScaB (278 aa).

Helical transmembrane passes span 18–38 (ALIT…FIIL), 61–81 (ILGI…SIII), 94–114 (TAIG…ISVA), 134–154 (LDMW…SIFF), 174–194 (VNFY…TAMQ), 196–216 (VGTI…YLYA), 222–242 (MILL…FIGY), and 246–266 (VAAG…SFFI).

Belongs to the ABC-3 integral membrane protein family. The complex is composed of two ATP-binding proteins (ScaC), two transmembrane proteins (ScaB) and a solute-binding protein (ScaA).

The protein resides in the cell membrane. Part of the high-affinity ABC transporter complex ScaABC involved in manganese import. Probably responsible for the translocation of the substrate across the membrane. Essential for growth under Mn(2+)-limiting conditions. The sequence is that of Manganese import system permease protein ScaB from Streptococcus gordonii.